An 83-amino-acid chain; its full sequence is Cytochrome b559 subunit alpha (83 aa).

The chain crosses the membrane as a helical span at residues 21-35 (VIHSITIPSLFIAGW). Histidine 23 serves as a coordination point for heme.

This sequence belongs to the PsbE/PsbF family. As to quaternary structure, heterodimer of an alpha subunit and a beta subunit. PSII is composed of 1 copy each of membrane proteins PsbA, PsbB, PsbC, PsbD, PsbE, PsbF, PsbH, PsbI, PsbJ, PsbK, PsbL, PsbM, PsbT, PsbX, PsbY, PsbZ, Psb30/Ycf12, at least 3 peripheral proteins of the oxygen-evolving complex and a large number of cofactors. It forms dimeric complexes. The cofactor is heme b.

It localises to the plastid. The protein resides in the chloroplast thylakoid membrane. In terms of biological role, this b-type cytochrome is tightly associated with the reaction center of photosystem II (PSII). PSII is a light-driven water:plastoquinone oxidoreductase that uses light energy to abstract electrons from H(2)O, generating O(2) and a proton gradient subsequently used for ATP formation. It consists of a core antenna complex that captures photons, and an electron transfer chain that converts photonic excitation into a charge separation. This chain is Cytochrome b559 subunit alpha, found in Agrostis stolonifera (Creeping bentgrass).